The primary structure comprises 215 residues: Protein-methionine-sulfoxide reductase heme-binding subunit MsrQ (215 aa).

6 helical membrane-spanning segments follow: residues 17–37 (AAIW…FYLA), 50–70 (FEHL…LVTP), 85–105 (ALGL…LVLD), 121–141 (PYIM…LTSN), 152–172 (WNTL…HFVL), and 177–197 (ITLE…YRLV).

This sequence belongs to the MsrQ family. Heterodimer of a catalytic subunit (MsrP) and a heme-binding subunit (MsrQ). The cofactor is FMN. Heme b serves as cofactor.

It localises to the cell inner membrane. Part of the MsrPQ system that repairs oxidized periplasmic proteins containing methionine sulfoxide residues (Met-O), using respiratory chain electrons. Thus protects these proteins from oxidative-stress damage caused by reactive species of oxygen and chlorine generated by the host defense mechanisms. MsrPQ is essential for the maintenance of envelope integrity under bleach stress, rescuing a wide series of structurally unrelated periplasmic proteins from methionine oxidation. MsrQ provides electrons for reduction to the reductase catalytic subunit MsrP, using the quinone pool of the respiratory chain. The polypeptide is Protein-methionine-sulfoxide reductase heme-binding subunit MsrQ (Agrobacterium fabrum (strain C58 / ATCC 33970) (Agrobacterium tumefaciens (strain C58))).